A 423-amino-acid chain; its full sequence is Ribosome biogenesis protein WDR12 homolog (423 aa).

The ubiquitin-like (UBL) domain stretch occupies residues 10–93 (VQVHLKTKQE…EDAIEIEYVE (84 aa)). WD repeat units follow at residues 105-142 (LHDDWVSAVKVSGKWILTGCYDNTLNIWTHKGKHILTI), 144-186 (GHTA…NAVE), 193-232 (GHERGVDSISVSPDATRFATGSWDTMLKVWSAAEDDAGGD), 253-291 (GHRESISAVQWIDTSTLLTTSWDHTMKIWDLSLEGIKTE), 293-332 (STNKSIFDASYSNLNRLIVTASADKNLRLYDPRTNQGSIV), 338-378 (GHNA…APLY), and 382-420 (GHGEKVLDIDWSNPKYICSGGADNTVRVFKSRKAGVETM).

This sequence belongs to the WD repeat WDR12/YTM1 family.

Its subcellular location is the nucleus. The protein localises to the nucleolus. It localises to the nucleoplasm. Functionally, required for maturation of ribosomal RNAs and formation of the large ribosomal subunit. The chain is Ribosome biogenesis protein WDR12 homolog from Drosophila willistoni (Fruit fly).